A 579-amino-acid polypeptide reads, in one-letter code: Peptidyl-prolyl cis-trans isomerase-like 2 (579 aa).

A U-box domain is found at 42–115 (RRLPFNFCSL…GEYVDPVTYK (74 aa)). Residues 227-261 (AERAQRAESGAASKGLTKPGMSATAASQKTVSHQA) are disordered. Positions 250 to 259 (TAASQKTVSH) are enriched in polar residues. The 160-residue stretch at 311 to 470 (QKGYARISTT…PDIRIKDVTI (160 aa)) folds into the PPIase cyclophilin-type domain. The segment at 555–579 (EGPEPEPAKKKFKGGGGFGDFSSWD) is disordered.

The protein belongs to the cyclophilin-type PPIase family. PPIL2 subfamily.

The protein resides in the nucleus. The enzyme catalyses [protein]-peptidylproline (omega=180) = [protein]-peptidylproline (omega=0). The catalysed reaction is S-ubiquitinyl-[E2 ubiquitin-conjugating enzyme]-L-cysteine + [acceptor protein]-L-lysine = [E2 ubiquitin-conjugating enzyme]-L-cysteine + N(6)-ubiquitinyl-[acceptor protein]-L-lysine.. It participates in protein modification; protein ubiquitination. Its function is as follows. May catalyze the cis-trans isomerization of proline imidic peptide bonds in oligopeptides thereby assisting the folding of proteins. May also function as a chaperone, playing a role in intracellular transport of proteins. May also have a protein ubiquitin ligase activity acting as an E3 ubiquitin protein ligase or as a ubiquitin-ubiquitin ligase promoting elongation of ubiquitin chains on proteins. The chain is Peptidyl-prolyl cis-trans isomerase-like 2 (cyp8) from Aspergillus fumigatus (strain ATCC MYA-4609 / CBS 101355 / FGSC A1100 / Af293) (Neosartorya fumigata).